The following is a 277-amino-acid chain: 5'-nucleotidase SurE (277 aa).

Residues D16, D17, S48, and N101 each contribute to the a divalent metal cation site.

Belongs to the SurE nucleotidase family. Requires a divalent metal cation as cofactor.

It is found in the cytoplasm. It carries out the reaction a ribonucleoside 5'-phosphate + H2O = a ribonucleoside + phosphate. Functionally, nucleotidase that shows phosphatase activity on nucleoside 5'-monophosphates. The sequence is that of 5'-nucleotidase SurE from Parvibaculum lavamentivorans (strain DS-1 / DSM 13023 / NCIMB 13966).